Reading from the N-terminus, the 248-residue chain is Ribosomal RNA small subunit methyltransferase J (248 aa).

Residues 98 to 99, 114 to 115, 150 to 151, and Asp-168 contribute to the S-adenosyl-L-methionine site; these read RD, ER, and SS.

Belongs to the methyltransferase superfamily. RsmJ family.

The protein resides in the cytoplasm. It carries out the reaction guanosine(1516) in 16S rRNA + S-adenosyl-L-methionine = N(2)-methylguanosine(1516) in 16S rRNA + S-adenosyl-L-homocysteine + H(+). Functionally, specifically methylates the guanosine in position 1516 of 16S rRNA. This chain is Ribosomal RNA small subunit methyltransferase J, found in Shewanella amazonensis (strain ATCC BAA-1098 / SB2B).